The following is a 338-amino-acid chain: D-erythrose-4-phosphate dehydrogenase (338 aa).

11-12 (RI) is a binding site for NAD(+). Residues 153–155 (SCT), Arg199, 212–213 (TK), and Arg235 each bind substrate. The active-site Nucleophile is Cys154. Asn317 provides a ligand contact to NAD(+).

Belongs to the glyceraldehyde-3-phosphate dehydrogenase family. Epd subfamily. As to quaternary structure, homotetramer.

The protein resides in the cytoplasm. The enzyme catalyses D-erythrose 4-phosphate + NAD(+) + H2O = 4-phospho-D-erythronate + NADH + 2 H(+). It functions in the pathway cofactor biosynthesis; pyridoxine 5'-phosphate biosynthesis; pyridoxine 5'-phosphate from D-erythrose 4-phosphate: step 1/5. Catalyzes the NAD-dependent conversion of D-erythrose 4-phosphate to 4-phosphoerythronate. This chain is D-erythrose-4-phosphate dehydrogenase, found in Shewanella amazonensis (strain ATCC BAA-1098 / SB2B).